The sequence spans 347 residues: Phosphoribosylformylglycinamidine cyclo-ligase (347 aa).

Belongs to the AIR synthase family.

It is found in the cytoplasm. It carries out the reaction 2-formamido-N(1)-(5-O-phospho-beta-D-ribosyl)acetamidine + ATP = 5-amino-1-(5-phospho-beta-D-ribosyl)imidazole + ADP + phosphate + H(+). It functions in the pathway purine metabolism; IMP biosynthesis via de novo pathway; 5-amino-1-(5-phospho-D-ribosyl)imidazole from N(2)-formyl-N(1)-(5-phospho-D-ribosyl)glycinamide: step 2/2. In Alkaliphilus metalliredigens (strain QYMF), this protein is Phosphoribosylformylglycinamidine cyclo-ligase.